Consider the following 156-residue polypeptide: ATP synthase subunit b (156 aa).

Residues valine 12–alanine 32 traverse the membrane as a helical segment.

It belongs to the ATPase B chain family. In terms of assembly, F-type ATPases have 2 components, F(1) - the catalytic core - and F(0) - the membrane proton channel. F(1) has five subunits: alpha(3), beta(3), gamma(1), delta(1), epsilon(1). F(0) has three main subunits: a(1), b(2) and c(10-14). The alpha and beta chains form an alternating ring which encloses part of the gamma chain. F(1) is attached to F(0) by a central stalk formed by the gamma and epsilon chains, while a peripheral stalk is formed by the delta and b chains.

It localises to the cell inner membrane. F(1)F(0) ATP synthase produces ATP from ADP in the presence of a proton or sodium gradient. F-type ATPases consist of two structural domains, F(1) containing the extramembraneous catalytic core and F(0) containing the membrane proton channel, linked together by a central stalk and a peripheral stalk. During catalysis, ATP synthesis in the catalytic domain of F(1) is coupled via a rotary mechanism of the central stalk subunits to proton translocation. In terms of biological role, component of the F(0) channel, it forms part of the peripheral stalk, linking F(1) to F(0). The chain is ATP synthase subunit b from Pseudomonas syringae pv. tomato (strain ATCC BAA-871 / DC3000).